A 276-amino-acid chain; its full sequence is NADPH-dependent 7-cyano-7-deazaguanine reductase (276 aa).

83–85 (IES) provides a ligand contact to substrate. Position 85-86 (85-86 (SK)) interacts with NADPH. Cys-184 functions as the Thioimide intermediate in the catalytic mechanism. Catalysis depends on Asp-191, which acts as the Proton donor. 223 to 224 (HE) provides a ligand contact to substrate. An NADPH-binding site is contributed by 252–253 (RG).

Belongs to the GTP cyclohydrolase I family. QueF type 2 subfamily. As to quaternary structure, homodimer.

Its subcellular location is the cytoplasm. The enzyme catalyses 7-aminomethyl-7-carbaguanine + 2 NADP(+) = 7-cyano-7-deazaguanine + 2 NADPH + 3 H(+). The protein operates within tRNA modification; tRNA-queuosine biosynthesis. Catalyzes the NADPH-dependent reduction of 7-cyano-7-deazaguanine (preQ0) to 7-aminomethyl-7-deazaguanine (preQ1). This is NADPH-dependent 7-cyano-7-deazaguanine reductase from Pseudomonas fluorescens (strain SBW25).